We begin with the raw amino-acid sequence, 481 residues long: Probable glycine dehydrogenase (decarboxylating) subunit 2 (481 aa).

Position 269 is an N6-(pyridoxal phosphate)lysine (Lys269).

Belongs to the GcvP family. C-terminal subunit subfamily. As to quaternary structure, the glycine cleavage system is composed of four proteins: P, T, L and H. In this organism, the P 'protein' is a heterodimer of two subunits. It depends on pyridoxal 5'-phosphate as a cofactor.

It catalyses the reaction N(6)-[(R)-lipoyl]-L-lysyl-[glycine-cleavage complex H protein] + glycine + H(+) = N(6)-[(R)-S(8)-aminomethyldihydrolipoyl]-L-lysyl-[glycine-cleavage complex H protein] + CO2. Functionally, the glycine cleavage system catalyzes the degradation of glycine. The P protein binds the alpha-amino group of glycine through its pyridoxal phosphate cofactor; CO(2) is released and the remaining methylamine moiety is then transferred to the lipoamide cofactor of the H protein. The protein is Probable glycine dehydrogenase (decarboxylating) subunit 2 of Chlorobium chlorochromatii (strain CaD3).